The following is a 132-amino-acid chain: Fatty acid-binding protein, adipocyte (132 aa).

Cys2 bears the N-acetylcysteine mark. Ser13 bears the Phosphoserine mark. Tyr20 bears the Phosphotyrosine; by Tyr-kinases mark. The Nuclear localization signal signature appears at 22–32; sequence KEVGVGFATRK. 127–129 serves as a coordination point for a fatty acid; the sequence is RVY.

This sequence belongs to the calycin superfamily. Fatty-acid binding protein (FABP) family. Monomer. Homodimer. Interacts with PPARG.

The protein localises to the cytoplasm. Its subcellular location is the nucleus. In terms of biological role, lipid transport protein in adipocytes. Binds both long chain fatty acids and retinoic acid. Delivers long-chain fatty acids and retinoic acid to their cognate receptors in the nucleus. FABPs are important elements related to the hibernating state in mammals. This Ictidomys tridecemlineatus (Thirteen-lined ground squirrel) protein is Fatty acid-binding protein, adipocyte (FABP4).